The primary structure comprises 300 residues: UDP-N-acetylenolpyruvoylglucosamine reductase (300 aa).

One can recognise an FAD-binding PCMH-type domain in the interval 27 to 192 (KVGGPADYLA…ISAKFALKPG (166 aa)). The active site involves Arg171. Ser221 serves as the catalytic Proton donor. Glu291 is an active-site residue.

It belongs to the MurB family. FAD serves as cofactor.

Its subcellular location is the cytoplasm. It carries out the reaction UDP-N-acetyl-alpha-D-muramate + NADP(+) = UDP-N-acetyl-3-O-(1-carboxyvinyl)-alpha-D-glucosamine + NADPH + H(+). The protein operates within cell wall biogenesis; peptidoglycan biosynthesis. In terms of biological role, cell wall formation. The sequence is that of UDP-N-acetylenolpyruvoylglucosamine reductase from Streptococcus agalactiae serotype Ia (strain ATCC 27591 / A909 / CDC SS700).